A 291-amino-acid chain; its full sequence is MAVGKEILTKIRSVQNTQKITKAMQMVSTSKMRKTQERMRLARPYAEKVRMVMSHLAQTNTDHGIPLLESHREIRRVGFILITSDKGLCGGLNANVLKKFLAQVQEYRNQGIEEEIVCFGSKGLMACQSIGLNVVASAVNLGDTPKMEMLLGPLTELFQRYEKHEIDRIHLVYSGFVNTMRQEPRMEVLLPIGENVIGDSAPKSPFSWEYRYEPTALAVLEYLVRRYLESVVYQALSDNMASEQAARMVAMKAATDNAGNAIKELRLVYNKSRQAAITTELSEIVAGAAAV.

It belongs to the ATPase gamma chain family. As to quaternary structure, F-type ATPases have 2 components, CF(1) - the catalytic core - and CF(0) - the membrane proton channel. CF(1) has five subunits: alpha(3), beta(3), gamma(1), delta(1), epsilon(1). CF(0) has three main subunits: a, b and c.

The protein resides in the cell inner membrane. Its function is as follows. Produces ATP from ADP in the presence of a proton gradient across the membrane. The gamma chain is believed to be important in regulating ATPase activity and the flow of protons through the CF(0) complex. The sequence is that of ATP synthase gamma chain from Neisseria meningitidis serogroup B (strain ATCC BAA-335 / MC58).